We begin with the raw amino-acid sequence, 254 residues long: MAIANKNIIFVAGLGGIGFDTSREIVKRGPKNLVILDRIENPAAIAELKALNPKVTVTFYPYDVTVSVAETTKLLKTIFDKLKTVDLLINGAGILDDHQIERTIAVNFTGTVNTITAIMSFWDKRKGGPGGVIANVCSVTGFNAIYQVPVYSASKAAALSFTNSLARLAPITGVTAYSINPGITKTTLVHKFNSWLDVEPRVAELLLEHPTQTTLQCAQNFVKAIEANQNGAIWKVDLGTLEAIEWTKHWDSHI.

10–33 (FVAGLGGIGFDTSREIVKRGPKNL) provides a ligand contact to NAD(+). Substrate is bound at residue S138. Catalysis depends on Y151, which acts as the Proton acceptor.

The protein belongs to the short-chain dehydrogenases/reductases (SDR) family. As to quaternary structure, homodimer.

It catalyses the reaction a primary alcohol + NAD(+) = an aldehyde + NADH + H(+). The catalysed reaction is a secondary alcohol + NAD(+) = a ketone + NADH + H(+). In Drosophila mojavensis (Fruit fly), this protein is Alcohol dehydrogenase 2 (Adh2).